The sequence spans 313 residues: Ribosomal RNA small subunit methyltransferase H (313 aa).

S-adenosyl-L-methionine-binding positions include 35 to 37 (GGH), aspartate 55, phenylalanine 79, aspartate 100, and glutamine 107.

Belongs to the methyltransferase superfamily. RsmH family.

The protein localises to the cytoplasm. It carries out the reaction cytidine(1402) in 16S rRNA + S-adenosyl-L-methionine = N(4)-methylcytidine(1402) in 16S rRNA + S-adenosyl-L-homocysteine + H(+). Functionally, specifically methylates the N4 position of cytidine in position 1402 (C1402) of 16S rRNA. The chain is Ribosomal RNA small subunit methyltransferase H from Burkholderia ambifaria (strain MC40-6).